The chain runs to 510 residues: Maturase K (510 aa).

Belongs to the intron maturase 2 family. MatK subfamily.

Its subcellular location is the plastid. The protein resides in the chloroplast. Functionally, usually encoded in the trnK tRNA gene intron. Probably assists in splicing its own and other chloroplast group II introns. The protein is Maturase K of Anomochloa marantoidea (Herbaceous bamboo).